The primary structure comprises 468 residues: 6-phospho-beta-galactosidase (468 aa).

Positions 19, 116, 159, 160, and 297 each coordinate D-galactose 6-phosphate. Glu160 functions as the Proton donor in the catalytic mechanism. Glu375 (nucleophile) is an active-site residue. 4 residues coordinate D-galactose 6-phosphate: Ser428, Trp429, Lys435, and Tyr437.

It belongs to the glycosyl hydrolase 1 family.

The enzyme catalyses a 6-phospho-beta-D-galactoside + H2O = D-galactose 6-phosphate + an alcohol. It participates in carbohydrate metabolism; lactose degradation; D-galactose 6-phosphate and beta-D-glucose from lactose 6-phosphate: step 1/1. In Streptococcus sanguinis (strain SK36), this protein is 6-phospho-beta-galactosidase.